The primary structure comprises 97 residues: Exodeoxyribonuclease 7 small subunit (97 aa).

The tract at residues 1-22 (MAKTASPGATPPGNGTEPLPDN) is disordered.

The protein belongs to the XseB family. In terms of assembly, heterooligomer composed of large and small subunits.

Its subcellular location is the cytoplasm. It carries out the reaction Exonucleolytic cleavage in either 5'- to 3'- or 3'- to 5'-direction to yield nucleoside 5'-phosphates.. Bidirectionally degrades single-stranded DNA into large acid-insoluble oligonucleotides, which are then degraded further into small acid-soluble oligonucleotides. This chain is Exodeoxyribonuclease 7 small subunit, found in Burkholderia lata (strain ATCC 17760 / DSM 23089 / LMG 22485 / NCIMB 9086 / R18194 / 383).